Here is a 313-residue protein sequence, read N- to C-terminus: Homoserine O-acetyltransferase (313 aa).

The Acyl-thioester intermediate role is filled by C142. Substrate is bound by residues K163 and S191. H234 acts as the Proton acceptor in catalysis. E236 is an active-site residue. R248 serves as a coordination point for substrate.

The protein belongs to the MetA family.

It is found in the cytoplasm. It catalyses the reaction L-homoserine + acetyl-CoA = O-acetyl-L-homoserine + CoA. The protein operates within amino-acid biosynthesis; L-methionine biosynthesis via de novo pathway; O-acetyl-L-homoserine from L-homoserine: step 1/1. Its function is as follows. Transfers an acetyl group from acetyl-CoA to L-homoserine, forming acetyl-L-homoserine. This chain is Homoserine O-acetyltransferase, found in Streptococcus sanguinis (strain SK36).